The following is a 231-amino-acid chain: Small ribosomal subunit protein uS2 (231 aa).

Belongs to the universal ribosomal protein uS2 family.

The protein is Small ribosomal subunit protein uS2 of Blochmanniella floridana.